Consider the following 80-residue polypeptide: Myocilin opposite strand protein (80 aa).

A disordered region spans residues 53–80; the sequence is EQAPPPHRTYLTVPPAPPPSPAEDPTVS.

The sequence is that of Myocilin opposite strand protein from Homo sapiens (Human).